A 486-amino-acid chain; its full sequence is Cobyric acid synthase (486 aa).

Positions valine 248–alanine 435 constitute a GATase cobBQ-type domain. Residue cysteine 329 is the Nucleophile of the active site. Residue histidine 427 is part of the active site.

This sequence belongs to the CobB/CobQ family. CobQ subfamily.

It participates in cofactor biosynthesis; adenosylcobalamin biosynthesis. In terms of biological role, catalyzes amidations at positions B, D, E, and G on adenosylcobyrinic A,C-diamide. NH(2) groups are provided by glutamine, and one molecule of ATP is hydrogenolyzed for each amidation. The protein is Cobyric acid synthase of Pseudomonas syringae pv. tomato (strain ATCC BAA-871 / DC3000).